Consider the following 205-residue polypeptide: MSKRHSAKYKIDRRMGENLWGRPKSPVNSRSYGPGQHGQRRKSKVSDFGLQLRAKQKLKGYYGNLTEKQFSRTYEEAARRKGNTSENLIALLESRLDAIVYRAKFVPTVFAARQFVNHGHVTVNGKRVNIPSYRCKAGDVIQVREKSRNMALVLEAVASNERDFAEYVSVDAKSLSATFVRAPELSEVPYPVKMEPNLVVEFYAS.

The interval methionine 1 to serine 46 is disordered. An S4 RNA-binding domain is found at serine 94–leucine 154.

It belongs to the universal ribosomal protein uS4 family. Part of the 30S ribosomal subunit. Contacts protein S5. The interaction surface between S4 and S5 is involved in control of translational fidelity.

In terms of biological role, one of the primary rRNA binding proteins, it binds directly to 16S rRNA where it nucleates assembly of the body of the 30S subunit. With S5 and S12 plays an important role in translational accuracy. This is Small ribosomal subunit protein uS4 from Caulobacter vibrioides (strain ATCC 19089 / CIP 103742 / CB 15) (Caulobacter crescentus).